Consider the following 450-residue polypeptide: Glucose-6-phosphate isomerase (450 aa).

Residue Thr-39 is modified to Phosphothreonine. Glu-291 functions as the Proton donor in the catalytic mechanism. Residues His-312 and Lys-426 contribute to the active site.

Belongs to the GPI family.

The protein resides in the cytoplasm. The catalysed reaction is alpha-D-glucose 6-phosphate = beta-D-fructose 6-phosphate. It functions in the pathway carbohydrate biosynthesis; gluconeogenesis. Its pathway is carbohydrate degradation; glycolysis; D-glyceraldehyde 3-phosphate and glycerone phosphate from D-glucose: step 2/4. In terms of biological role, catalyzes the reversible isomerization of glucose-6-phosphate to fructose-6-phosphate. The polypeptide is Glucose-6-phosphate isomerase (Bacillus thuringiensis (strain Al Hakam)).